Here is a 432-residue protein sequence, read N- to C-terminus: Gamma-glutamyl phosphate reductase (432 aa).

The protein belongs to the gamma-glutamyl phosphate reductase family.

It localises to the cytoplasm. It carries out the reaction L-glutamate 5-semialdehyde + phosphate + NADP(+) = L-glutamyl 5-phosphate + NADPH + H(+). The protein operates within amino-acid biosynthesis; L-proline biosynthesis; L-glutamate 5-semialdehyde from L-glutamate: step 2/2. In terms of biological role, catalyzes the NADPH-dependent reduction of L-glutamate 5-phosphate into L-glutamate 5-semialdehyde and phosphate. The product spontaneously undergoes cyclization to form 1-pyrroline-5-carboxylate. In Methylorubrum extorquens (strain PA1) (Methylobacterium extorquens), this protein is Gamma-glutamyl phosphate reductase.